The sequence spans 328 residues: Hairy/enhancer-of-split related with YRPW motif-like protein (328 aa).

Residues 1–57 (MKRPKEPSGSDGESDGPIDVGQEGQLSQMARPLSTPSSSQMQARKKHRGIIEKRRRD) form a disordered region. Polar residues predominate over residues 24–42 (GQLSQMARPLSTPSSSQMQ). The transcriptional repression and interaction with NCOR1 and SIN3A stretch occupies residues 42–111 (QARKKHRGII…GGTGFFDARA (70 aa)). The bHLH domain maps to 43–98 (ARKKHRGIIEKRRRDRINSSLSELRRLVPTAFEKQGSSKLEKAEVLQMTVDHLKML). The Orange domain occupies 116–153 (FRSIGFRECLTEVIRYLGVLEGPSSRADPVRIRLLSHL). A disordered region spans residues 239–308 (SRGASSTRRA…NSSSPGPAGR (70 aa)). The segment covering 261–270 (APSSRAARSS) has biased composition (low complexity).

It belongs to the HEY family. In terms of assembly, self-associates. Interacts with GATA4, GATA6, HES1, HEY1 and HEY2. Interacts with HDAC1, NCOR1 and SIN3A.

It is found in the nucleus. Functionally, downstream effector of Notch signaling which may be required for cardiovascular development. Transcriptional repressor which binds preferentially to the canonical E box sequence 5'-CACGTG-3'. Represses transcription by the cardiac transcriptional activators GATA4 and GATA6. In Homo sapiens (Human), this protein is Hairy/enhancer-of-split related with YRPW motif-like protein (HEYL).